The chain runs to 216 residues: Acyl-homoserine-lactone synthase (216 aa).

This sequence belongs to the autoinducer synthase family.

It catalyses the reaction a fatty acyl-[ACP] + S-adenosyl-L-methionine = an N-acyl-L-homoserine lactone + S-methyl-5'-thioadenosine + holo-[ACP] + H(+). In terms of biological role, required for the synthesis of an acyl-HSL autoinducer that binds to YukR and which is involved in the regulation of motility and morphology. In Yersinia ruckeri, this protein is Acyl-homoserine-lactone synthase (yukI).